Consider the following 617-residue polypeptide: BPI fold-containing family B member 4 (617 aa).

An N-terminal signal peptide occupies residues 1 to 17; sequence MWTAWCVAALSVAAVCG. Residues 124–149 form a disordered region; it reads RPSDSAYHRGPGRYRSAADPSSAGRL. Asn-275 carries an N-linked (GlcNAc...) asparagine glycan. A disulfide bridge connects residues Cys-297 and Cys-334.

This sequence belongs to the BPI/LBP/Plunc superfamily. BPI/LBP family. In terms of tissue distribution, highly expressed in olfactory mucosa but undetectable in thymus, kidney, lung, brain, spleen and liver.

It is found in the secreted. Its subcellular location is the cytoplasm. Its function is as follows. May have the capacity to recognize and bind specific classes of odorants. May act as a carrier molecule, transporting odorants across the mucus layer to access receptor sites. May serve as a primary defense mechanism by recognizing and removing potentially harmful odorants or pathogenic microorganisms from the mucosa or clearing excess odorant from mucus to enable new odorant stimuli to be received. The chain is BPI fold-containing family B member 4 (Bpifb4) from Rattus norvegicus (Rat).